Reading from the N-terminus, the 319-residue chain is Cobalamin biosynthesis protein CobD (319 aa).

3 helical membrane-spanning segments follow: residues 54–76 (VLLL…WLSY), 154–173 (GVTA…ALLY), and 301–318 (VLGF…IYAI).

This sequence belongs to the CobD/CbiB family.

Its subcellular location is the cell membrane. It participates in cofactor biosynthesis; adenosylcobalamin biosynthesis. Its function is as follows. Converts cobyric acid to cobinamide by the addition of aminopropanol on the F carboxylic group. In Halalkalibacterium halodurans (strain ATCC BAA-125 / DSM 18197 / FERM 7344 / JCM 9153 / C-125) (Bacillus halodurans), this protein is Cobalamin biosynthesis protein CobD.